The following is a 180-amino-acid chain: ATP-dependent protease subunit HslV (180 aa).

Residue threonine 7 is part of the active site. Residues alanine 165, cysteine 168, and threonine 171 each contribute to the Na(+) site.

The protein belongs to the peptidase T1B family. HslV subfamily. As to quaternary structure, a double ring-shaped homohexamer of HslV is capped on each side by a ring-shaped HslU homohexamer. The assembly of the HslU/HslV complex is dependent on binding of ATP.

Its subcellular location is the cytoplasm. It carries out the reaction ATP-dependent cleavage of peptide bonds with broad specificity.. Its activity is regulated as follows. Allosterically activated by HslU binding. Its function is as follows. Protease subunit of a proteasome-like degradation complex believed to be a general protein degrading machinery. This chain is ATP-dependent protease subunit HslV, found in Geobacillus kaustophilus (strain HTA426).